Consider the following 186-residue polypeptide: Putative manganese efflux pump MntP (186 aa).

Transmembrane regions (helical) follow at residues 1-21, 41-61, 71-91, 105-125, 130-150, and 165-185; these read MSFL…FAVS, VFFG…GSAV, WIAF…ALYG, LLML…SFAF, ILEP…CGAV, and IIGG…HLLW.

Belongs to the MntP (TC 9.B.29) family.

The protein localises to the cell membrane. Its function is as follows. Probably functions as a manganese efflux pump. The protein is Putative manganese efflux pump MntP of Methanosarcina barkeri (strain Fusaro / DSM 804).